Consider the following 410-residue polypeptide: Regulator of microtubule dynamics protein 2 (410 aa).

Residues 10–27 form a helical membrane-spanning segment; that stretch reads ILGIVVGTAGISLLLLWY. A coiled-coil region spans residues 71–109; the sequence is RQLQILEKLNELLTHMEELKEEIRVLKEAIPKLEEYIQG. Ser-121 is subject to Phosphoserine. The span at 122 to 131 shows a compositional bias: basic residues; it reads PQHRARKRRL. The segment at 122 to 153 is disordered; the sequence is PQHRARKRRLATVQSSATSNSSEEAESEGGYV. Thr-139 carries the phosphothreonine modification. At Tyr-152 the chain carries Phosphotyrosine. Phosphothreonine is present on residues Thr-154 and Thr-157.

It belongs to the RMDN family. In terms of assembly, interacts with microtubules.

It localises to the membrane. The protein localises to the cytoplasm. Its subcellular location is the cytoskeleton. It is found in the spindle. The protein resides in the spindle pole. The protein is Regulator of microtubule dynamics protein 2 (RMDN2) of Bos taurus (Bovine).